A 63-amino-acid polypeptide reads, in one-letter code: Large ribosomal subunit protein bL35 (63 aa).

The interval 24 to 44 (RAKAYRSHRATGKTTKQKRQL) is disordered.

The protein belongs to the bacterial ribosomal protein bL35 family.

This Mycoplasma mycoides subsp. mycoides SC (strain CCUG 32753 / NCTC 10114 / PG1) protein is Large ribosomal subunit protein bL35.